The following is a 95-amino-acid chain: Small ribosomal subunit protein uS17 (95 aa).

This sequence belongs to the universal ribosomal protein uS17 family. As to quaternary structure, part of the 30S ribosomal subunit.

One of the primary rRNA binding proteins, it binds specifically to the 5'-end of 16S ribosomal RNA. The polypeptide is Small ribosomal subunit protein uS17 (Psychrobacter sp. (strain PRwf-1)).